A 710-amino-acid chain; its full sequence is MSMSFRPLKYKRHTQTSTQHHPKQDIYFHQQPPGPPLGQTMSPPQWQVEESNPDFLPNNFNQLNLDPQQPEAKGGQQMSKGPENNLYRKYEEKVRPCIDLIDSLRALGVEQDLALPAIAVIGDQSSGKSSVLEALSGVALPRGSGIITRCPLVLKLTKRECEWTGKITYRNITQQLQNPSEVEWEIRRAQNIIAGNGLGISHELINLEITSPEVPDLTLIDLPGITRVAVENQPQDIGLQIKALIKKYIQRQETINLVVVPCNVDIATTEALSMAQEVDPDGDRTIGILTKPDLVDKGTEKGVLKVMQNLTYHLKKGYMIVKCRGQQDITNKLSLAEATRKETMFFETHPYFRILLDEGKATVPLLAERLTTELIWHINKSLPLLENQIKEKHQRATEELQQYGDDIPSDEGDKMFFLIEKIKVFNEDIGKLIEGEEIVMETESRLCNKIREEFTSWILILTTNIEKVKSILNEEVSKYEKKYRGKELLGFVNYKTFETVVKHYLGQLIDPALKMLQKAMEIVWQTFKDTAKKHFAEFCNLHQTVQNKIEDIKTKQMAEAANLIQLQFRMEKLVFCQDQIYGVVLNKVREDIFNSMGKASETPQSKQPFLNDQSSISSIVEIGVHLNAYFMETSKRLANQIPFIIQYFMLQENGDKVQKAMMQLLQDTQHYSWLLQEQSDTATKRKFLKEKIFRLTQAQQALYEFPHFKG.

Residues 1-51 form a disordered region; it reads MSMSFRPLKYKRHTQTSTQHHPKQDIYFHQQPPGPPLGQTMSPPQWQVEES. The segment covering 39 to 50 has biased composition (polar residues); it reads QTMSPPQWQVEE. Residues 112-383 form the Dynamin-type G domain; the sequence is DLALPAIAVI…LIWHINKSLP (272 aa). Positions 122–129 are G1 motif; that stretch reads GDQSSGKS. A GTP-binding site is contributed by 122–129; sequence GDQSSGKS. The tract at residues 147 to 149 is G2 motif; it reads ITR. The interval 221-224 is G3 motif; sequence DLPG. Residues 221 to 225 and 290 to 293 each bind GTP; these read DLPGI and TKPD. Residues 290–293 are G4 motif; that stretch reads TKPD. The interval 322–325 is G5 motif; sequence KCRG. A GED domain is found at 619-710; sequence IVEIGVHLNA…ALYEFPHFKG (92 aa).

The protein belongs to the TRAFAC class dynamin-like GTPase superfamily. Dynamin/Fzo/YdjA family.

Its subcellular location is the cytoplasm. The protein localises to the nucleus. Its function is as follows. Interferon-induced dynamin-like GTPase with antiviral activity against vesicular stomatitis virus (VSV). This chain is Interferon-induced GTP-binding protein Mx2 (MX2), found in Bos taurus (Bovine).